The chain runs to 194 residues: Transposon Tn2501 resolvase (194 aa).

A Resolvase/invertase-type recombinase catalytic domain is found at 3-143 (RVFAYCRVST…SGIARAKATG (141 aa)). Serine 11 functions as the O-(5'-phospho-DNA)-serine intermediate in the catalytic mechanism. The H-T-H motif DNA-binding region spans 170-189 (ISAIAREFNTTRQTILRVKA).

The protein belongs to the site-specific recombinase resolvase family.

Its function is as follows. Resolvase catalyzes the resolution (a site-specific recombination) of the cointegrated replicon to yield the final transposition products. This Escherichia coli protein is Transposon Tn2501 resolvase (tnpR).